A 96-amino-acid chain; its full sequence is Aspartyl/glutamyl-tRNA(Asn/Gln) amidotransferase subunit C (96 aa).

Belongs to the GatC family. As to quaternary structure, heterotrimer of A, B and C subunits.

The enzyme catalyses L-glutamyl-tRNA(Gln) + L-glutamine + ATP + H2O = L-glutaminyl-tRNA(Gln) + L-glutamate + ADP + phosphate + H(+). It carries out the reaction L-aspartyl-tRNA(Asn) + L-glutamine + ATP + H2O = L-asparaginyl-tRNA(Asn) + L-glutamate + ADP + phosphate + 2 H(+). Allows the formation of correctly charged Asn-tRNA(Asn) or Gln-tRNA(Gln) through the transamidation of misacylated Asp-tRNA(Asn) or Glu-tRNA(Gln) in organisms which lack either or both of asparaginyl-tRNA or glutaminyl-tRNA synthetases. The reaction takes place in the presence of glutamine and ATP through an activated phospho-Asp-tRNA(Asn) or phospho-Glu-tRNA(Gln). The protein is Aspartyl/glutamyl-tRNA(Asn/Gln) amidotransferase subunit C of Fusobacterium nucleatum subsp. nucleatum (strain ATCC 25586 / DSM 15643 / BCRC 10681 / CIP 101130 / JCM 8532 / KCTC 2640 / LMG 13131 / VPI 4355).